Reading from the N-terminus, the 284-residue chain is Tropomyosin beta chain (284 aa).

An N-acetylmethionine modification is found at M1. The segment at 1–65 (MDAIKKKMQM…EVEKYSESVK (65 aa)) is disordered. Positions 1–284 (MDAIKKKMQM…DNALNDITSL (284 aa)) form a coiled coil. 2 stretches are compositionally biased toward basic and acidic residues: residues 12–40 (KLDK…KQLE) and 51–65 (KGTE…ESVK). T53 is subject to Phosphothreonine. S61 is modified (phosphoserine; by PIK3CG). Residue T79 is modified to Phosphothreonine. A Phosphoserine modification is found at S87. Phosphothreonine is present on T108. The interval 117–136 (EKAADESERGMKVIENRAMK) is disordered. Phosphoserine occurs at positions 158, 206, and 215. T252 carries the phosphothreonine modification. The residue at position 261 (Y261) is a Phosphotyrosine. A Phosphoserine modification is found at S271. T282 is subject to Phosphothreonine. S283 carries the post-translational modification Phosphoserine.

It belongs to the tropomyosin family. In terms of assembly, homodimer. Heterodimer of an alpha (TPM1, TPM3 or TPM4) and a beta (TPM2) chain. In terms of processing, phosphorylated on Ser-61 by PIK3CG. Phosphorylation on Ser-61 is required for ADRB2 internalization. In terms of tissue distribution, present in primary breast cancer tissue, absent from normal breast tissue.

The protein resides in the cytoplasm. Its subcellular location is the cytoskeleton. Functionally, binds to actin filaments in muscle and non-muscle cells. Plays a central role, in association with the troponin complex, in the calcium dependent regulation of vertebrate striated muscle contraction. Smooth muscle contraction is regulated by interaction with caldesmon. In non-muscle cells is implicated in stabilizing cytoskeleton actin filaments. The non-muscle isoform may have a role in agonist-mediated receptor internalization. The polypeptide is Tropomyosin beta chain (TPM2) (Homo sapiens (Human)).